Consider the following 264-residue polypeptide: Small ribosomal subunit protein uS2 (264 aa).

This sequence belongs to the universal ribosomal protein uS2 family.

The protein is Small ribosomal subunit protein uS2 of Helicobacter pylori (strain Shi470).